A 212-amino-acid polypeptide reads, in one-letter code: Nucleoside triphosphate pyrophosphatase (212 aa).

Aspartate 79 (proton acceptor) is an active-site residue.

The protein belongs to the Maf family. A divalent metal cation serves as cofactor.

It is found in the cytoplasm. The catalysed reaction is a ribonucleoside 5'-triphosphate + H2O = a ribonucleoside 5'-phosphate + diphosphate + H(+). It catalyses the reaction a 2'-deoxyribonucleoside 5'-triphosphate + H2O = a 2'-deoxyribonucleoside 5'-phosphate + diphosphate + H(+). Its function is as follows. Nucleoside triphosphate pyrophosphatase. May have a dual role in cell division arrest and in preventing the incorporation of modified nucleotides into cellular nucleic acids. The polypeptide is Nucleoside triphosphate pyrophosphatase (Nocardia farcinica (strain IFM 10152)).